A 188-amino-acid chain; its full sequence is Transmembrane protein 160 (188 aa).

Residues M1–R96 constitute a mitochondrion transit peptide. The disordered stretch occupies residues P25–V52. A compositionally biased stretch (low complexity) spans R29–A38. A Phosphoserine modification is found at S48. The next 2 membrane-spanning stretches (helical) occupy residues F102–A122 and A135–L155.

The protein belongs to the TMEM160 family.

Its subcellular location is the mitochondrion inner membrane. This chain is Transmembrane protein 160, found in Bos taurus (Bovine).